The following is a 127-amino-acid chain: MSNLPAGLKYAKTHEWARLEADGTVKVGISDHAQEALGDLVYLELPAVGRRVHAGEACAVVESVKAAADVNSPLSGEIVARNEALADAPERVNQSPYEAWLFAVRPDDIGEMDQLLDAEGYRTIAEE.

The Lipoyl-binding domain maps to 24–105 (TVKVGISDHA…PYEAWLFAVR (82 aa)). N6-lipoyllysine is present on lysine 65.

It belongs to the GcvH family. In terms of assembly, the glycine cleavage system is composed of four proteins: P, T, L and H. It depends on (R)-lipoate as a cofactor.

Its function is as follows. The glycine cleavage system catalyzes the degradation of glycine. The H protein shuttles the methylamine group of glycine from the P protein to the T protein. The polypeptide is Glycine cleavage system H protein (Methylococcus capsulatus (strain ATCC 33009 / NCIMB 11132 / Bath)).